The chain runs to 233 residues: MQESKEQRVHGVFEKIYKNYDQMNSVISFQQHKKWRDKTMQIMNVKEGAKALDVCCGTADWTIALAEAAGKSGEIKGLDFSKNMLSIGEKKVKEGGYSQIELLHGNAMELPFADDSFDFVTIGFGLRNVPDYLTVLKEMRRVVKPGGQVVCLETSQPEMFGFRQAYFLYFKYIMPFFGKMFAKSYKEYSWLQESAREFPGMKELARLFEEAGLTNVKYHSFTGGVAATHIGWK.

Residues Thr58, Asp79, and 106–107 (NA) contribute to the S-adenosyl-L-methionine site.

The protein belongs to the class I-like SAM-binding methyltransferase superfamily. MenG/UbiE family.

It carries out the reaction a 2-demethylmenaquinol + S-adenosyl-L-methionine = a menaquinol + S-adenosyl-L-homocysteine + H(+). Its pathway is quinol/quinone metabolism; menaquinone biosynthesis; menaquinol from 1,4-dihydroxy-2-naphthoate: step 2/2. Methyltransferase required for the conversion of demethylmenaquinol (DMKH2) to menaquinol (MKH2). The protein is Demethylmenaquinone methyltransferase of Bacillus velezensis (strain DSM 23117 / BGSC 10A6 / LMG 26770 / FZB42) (Bacillus amyloliquefaciens subsp. plantarum).